Consider the following 303-residue polypeptide: MWFKNLTVYRFNKPFSVDPDSLEKSLEDFTFSPCSSQDISKFGFSKAMGKHGETLIHTAGDRHLICATKEEKILPSQVIKEALEEKVGHLEAEENRKLTKKEKDALKDEITTTLLPRAFSRRSQIRALILPEIQMILVDSSSAAKSEELMALLRKAIGTLPIIPISFKTPIETQLTEWLKEGKTPPAFEMQDEAELKSDSDEGGIVRFKQQDLSENEVLAHIEVGKQVHKLALHFGQSIAFVLQSDAAIKRLKFSEEFRADNDDLGNDDPMARLDADFALMSSELIALINAVVDALGGLEDSI.

It belongs to the RdgC family.

It localises to the cytoplasm. Its subcellular location is the nucleoid. Its function is as follows. May be involved in recombination. The polypeptide is Recombination-associated protein RdgC (Shewanella halifaxensis (strain HAW-EB4)).